We begin with the raw amino-acid sequence, 268 residues long: Aliphatic sulfonates import ATP-binding protein SsuB 2 (268 aa).

The 215-residue stretch at 16–230 folds into the ABC transporter domain; sequence VQLRNVVRQF…DSGQAGFQSI (215 aa). 48–55 is a binding site for ATP; it reads GASGSGKT.

This sequence belongs to the ABC transporter superfamily. Aliphatic sulfonates importer (TC 3.A.1.17.2) family. In terms of assembly, the complex is composed of two ATP-binding proteins (SsuB), two transmembrane proteins (SsuC) and a solute-binding protein (SsuA).

It is found in the cell inner membrane. The catalysed reaction is ATP + H2O + aliphatic sulfonate-[sulfonate-binding protein]Side 1 = ADP + phosphate + aliphatic sulfonateSide 2 + [sulfonate-binding protein]Side 1.. Its function is as follows. Part of the ABC transporter complex SsuABC involved in aliphatic sulfonates import. Responsible for energy coupling to the transport system. This chain is Aliphatic sulfonates import ATP-binding protein SsuB 2, found in Pseudomonas savastanoi pv. phaseolicola (strain 1448A / Race 6) (Pseudomonas syringae pv. phaseolicola (strain 1448A / Race 6)).